Consider the following 279-residue polypeptide: Nucleotide-binding protein THA_1518 (279 aa).

ATP is bound at residue 9–16; it reads GLSGAGKS. 57-60 serves as a coordination point for GTP; it reads DARS.

Belongs to the RapZ-like family.

Functionally, displays ATPase and GTPase activities. This chain is Nucleotide-binding protein THA_1518, found in Thermosipho africanus (strain TCF52B).